A 414-amino-acid polypeptide reads, in one-letter code: Enolase (414 aa).

Residue Q156 coordinates (2R)-2-phosphoglycerate. The active-site Proton donor is the E200. Mg(2+) contacts are provided by D236, E281, and D308. 4 residues coordinate (2R)-2-phosphoglycerate: K333, R362, S363, and K384. The active-site Proton acceptor is K333.

It belongs to the enolase family. Mg(2+) serves as cofactor.

It is found in the cytoplasm. Its subcellular location is the secreted. It localises to the cell surface. It carries out the reaction (2R)-2-phosphoglycerate = phosphoenolpyruvate + H2O. Its pathway is carbohydrate degradation; glycolysis; pyruvate from D-glyceraldehyde 3-phosphate: step 4/5. Its function is as follows. Catalyzes the reversible conversion of 2-phosphoglycerate (2-PG) into phosphoenolpyruvate (PEP). It is essential for the degradation of carbohydrates via glycolysis. This chain is Enolase, found in Methanosphaera stadtmanae (strain ATCC 43021 / DSM 3091 / JCM 11832 / MCB-3).